The sequence spans 72 residues: Large ribosomal subunit protein bL31 (72 aa).

4 residues coordinate Zn(2+): cysteine 16, cysteine 18, cysteine 38, and cysteine 41.

It belongs to the bacterial ribosomal protein bL31 family. Type A subfamily. As to quaternary structure, part of the 50S ribosomal subunit. Zn(2+) is required as a cofactor.

Its function is as follows. Binds the 23S rRNA. The polypeptide is Large ribosomal subunit protein bL31 (Aromatoleum aromaticum (strain DSM 19018 / LMG 30748 / EbN1) (Azoarcus sp. (strain EbN1))).